We begin with the raw amino-acid sequence, 431 residues long: Ribosome assembly protein SQT1 (431 aa).

WD repeat units lie at residues 63 to 102 (KHTD…PKFA), 107 to 146 (GYGE…AQWK), 149 to 192 (SQMQ…GSLE), 199 to 243 (VHQQ…QLFK), 309 to 348 (ELDA…VRHK), and 350 to 387 (VLED…EKFV).

Interacts strongly with QSR1. Part of an oligomeric protein complex that is loosely associated with ribosomes.

In terms of biological role, may be involved in the late step of 60S ribosomal subunit assembly or modification in the cytoplasm. This Saccharomyces cerevisiae (strain ATCC 204508 / S288c) (Baker's yeast) protein is Ribosome assembly protein SQT1 (SQT1).